We begin with the raw amino-acid sequence, 166 residues long: uncharacterized protein (166 aa).

Residues 73-88 (SKLNNNNNSNNNNKMA) are compositionally biased toward low complexity. 2 disordered regions span residues 73–101 (SKLN…EKDK) and 126–166 (PQSS…EFNN). Basic and acidic residues predominate over residues 89-101 (VDNKDNKDNEKDK). Low complexity predominate over residues 134-154 (SPTHKSPSSSPKTISPVKVSP). Residues 155–166 (TSSPIKNPEFNN) show a composition bias toward polar residues.

This is an uncharacterized protein from Dictyostelium discoideum (Social amoeba).